Here is a 165-residue protein sequence, read N- to C-terminus: NADH-quinone oxidoreductase subunit I (165 aa).

4Fe-4S ferredoxin-type domains follow at residues 57–86 (RRYDNGEERCIACKLCEAVCPALAITIESE) and 96–125 (SRYDIDLTKCIFCGFCEEACPVDAIVETHI). Residues cysteine 66, cysteine 69, cysteine 72, cysteine 76, cysteine 105, cysteine 108, cysteine 111, and cysteine 115 each coordinate [4Fe-4S] cluster.

It belongs to the complex I 23 kDa subunit family. NDH-1 is composed of 14 different subunits. Subunits NuoA, H, J, K, L, M, N constitute the membrane sector of the complex. It depends on [4Fe-4S] cluster as a cofactor.

Its subcellular location is the cell inner membrane. It carries out the reaction a quinone + NADH + 5 H(+)(in) = a quinol + NAD(+) + 4 H(+)(out). In terms of biological role, NDH-1 shuttles electrons from NADH, via FMN and iron-sulfur (Fe-S) centers, to quinones in the respiratory chain. The immediate electron acceptor for the enzyme in this species is believed to be ubiquinone. Couples the redox reaction to proton translocation (for every two electrons transferred, four hydrogen ions are translocated across the cytoplasmic membrane), and thus conserves the redox energy in a proton gradient. The protein is NADH-quinone oxidoreductase subunit I of Polaromonas sp. (strain JS666 / ATCC BAA-500).